The following is a 1675-amino-acid chain: Clathrin heavy chain 1 (1675 aa).

Ala-2 is subject to N-acetylalanine. The tract at residues 2-479 (AQILPIRFQE…VDPTLALSVY (478 aa)) is globular terminal domain. WD40-like repeat regions lie at residues 24–67 (NIGF…RPIS), 68–107 (ADSA…MTDD), 108–149 (VTFW…SSLA), 150–195 (GCQI…QPIE), 196–257 (GHAA…PEAQ), 258–301 (NDFP…ISGE), and 302–330 (TIFV…VCVE). A Phosphoserine modification is found at Ser-67. The residue at position 105 (Thr-105) is a Phosphothreonine. Tyr-184 carries the post-translational modification Phosphotyrosine. Thr-394 is modified (phosphothreonine). A binding site for the uncoating ATPase, involved in lattice disassembly region spans residues 449-465 (EKWLKEDKLECSEELGD). The segment at 480–523 (LRANVPNKVIQCFAETGQVQKIVLYAKKVGYTPDWIFLLRNVMR) is flexible linker. Residues 524–634 (ISPDQGQQFA…RALEHFTDLY (111 aa)) form a distal segment region. The tract at residues 524–1675 (ISPDQGQQFA…QPQPGFGYSM (1152 aa)) is heavy chain arm. CHCR repeat units follow at residues 537–683 (VQDE…QICV), 686–828 (ASKY…SEDV), 833–972 (ILVV…PLID), 979–1124 (LSET…VKEA), 1128–1269 (YIKA…FRLA), 1274–1420 (LHIV…LLLN), and 1423–1566 (LMVL…RECF). Tyr-634 is subject to Phosphotyrosine. A proximal segment region spans residues 639–1675 (AVVHTHLLNP…QPQPGFGYSM (1037 aa)). An N6-succinyllysine modification is found at Lys-737. Lys-856 is subject to N6-acetyllysine. Tyr-899 carries the phosphotyrosine modification. Ser-1167 is subject to Phosphoserine. Tyr-1206 carries the phosphotyrosine modification. Positions 1213–1522 (AAKLLYNNVS…YLFKGNNRWK (310 aa)) are involved in binding clathrin light chain. Ser-1229 is modified (phosphoserine). N6-acetyllysine; alternate is present on Lys-1441. Lys-1441 carries the post-translational modification N6-succinyllysine; alternate. A phosphotyrosine mark is found at Tyr-1477 and Tyr-1487. Phosphoserine is present on Ser-1494. Lys-1501 is subject to N6-acetyllysine. Positions 1550-1675 (AEELLQWFLQ…QPQPGFGYSM (126 aa)) are trimerization.

It belongs to the clathrin heavy chain family. Clathrin triskelions, composed of 3 heavy chains and 3 light chains, are the basic subunits of the clathrin coat. In the presence of light chains, hub assembly is influenced by both the pH and the concentration of calcium. Interacts with HIP1. Interacts with DENND1A, DENND1B and DENND1C. Interacts with OCRL. Interacts with ERBB2. Interacts with FKBP6. Interacts with CKAP5 and TACC3 forming the TACC3/ch-TOG/clathrin complex located at spindle inter-microtubules bridges; the complex implicates clathrin triskelions; TACC3 and CLTC are proposed to form a composite microtubule interaction surface. Interacts with ATG16L1 (via N-terminus). Interacts with RFTN1; the interaction occurs in response to pathogens. Interacts with TMEM106B (via N-terminus). Interacts with DNAJC6; this interaction produces a local change in heavy-chain contacts, creating a detectable global distortion of the clathrin coat and leads to the recruitment of HSPA8.

It is found in the cytoplasmic vesicle membrane. The protein localises to the membrane. It localises to the coated pit. The protein resides in the melanosome. Its subcellular location is the cytoplasm. It is found in the cytoskeleton. The protein localises to the spindle. Functionally, clathrin is the major protein of the polyhedral coat of coated pits and vesicles. Two different adapter protein complexes link the clathrin lattice either to the plasma membrane or to the trans-Golgi network. Acts as a component of the TACC3/ch-TOG/clathrin complex proposed to contribute to stabilization of kinetochore fibers of the mitotic spindle by acting as inter-microtubule bridge. The TACC3/ch-TOG/clathrin complex is required for the maintenance of kinetochore fiber tension. Plays a role in early autophagosome formation. Interaction with DNAJC6 mediates the recruitment of HSPA8 to the clathrin lattice and creates local destabilization of the lattice promoting uncoating. This is Clathrin heavy chain 1 from Bos taurus (Bovine).